The sequence spans 525 residues: GMP synthase [glutamine-hydrolyzing] (525 aa).

The Glutamine amidotransferase type-1 domain maps to 8-207; sequence KILILDFGSQ…ALDICGCDAN (200 aa). Catalysis depends on C85, which acts as the Nucleophile. Active-site residues include H181 and E183. The GMPS ATP-PPase domain occupies 208 to 400; sequence WKPSSIIEDA…LGLPYDMLYR (193 aa). 235-241 is an ATP binding site; it reads SGGVDSS.

As to quaternary structure, homodimer.

The catalysed reaction is XMP + L-glutamine + ATP + H2O = GMP + L-glutamate + AMP + diphosphate + 2 H(+). It participates in purine metabolism; GMP biosynthesis; GMP from XMP (L-Gln route): step 1/1. Catalyzes the synthesis of GMP from XMP. The polypeptide is GMP synthase [glutamine-hydrolyzing] (Shewanella piezotolerans (strain WP3 / JCM 13877)).